Reading from the N-terminus, the 353-residue chain is Nicotinate-nucleotide--dimethylbenzimidazole phosphoribosyltransferase (353 aa).

The Proton acceptor role is filled by Glu318.

It belongs to the CobT family.

The enzyme catalyses 5,6-dimethylbenzimidazole + nicotinate beta-D-ribonucleotide = alpha-ribazole 5'-phosphate + nicotinate + H(+). It functions in the pathway nucleoside biosynthesis; alpha-ribazole biosynthesis; alpha-ribazole from 5,6-dimethylbenzimidazole: step 1/2. In terms of biological role, catalyzes the synthesis of alpha-ribazole-5'-phosphate from nicotinate mononucleotide (NAMN) and 5,6-dimethylbenzimidazole (DMB). The polypeptide is Nicotinate-nucleotide--dimethylbenzimidazole phosphoribosyltransferase (Chloroflexus aggregans (strain MD-66 / DSM 9485)).